Reading from the N-terminus, the 350-residue chain is Glycolate oxidase subunit GlcE (350 aa).

An FAD-binding PCMH-type domain is found at 1–173 (MLRECDYSQA…TEISMKVLPR (173 aa)).

In terms of assembly, the glycolate oxidase likely consists of three subunits, GlcD, GlcE and GlcF. It depends on FAD as a cofactor.

The protein resides in the cell inner membrane. It carries out the reaction glycolate + A = glyoxylate + AH2. The enzyme catalyses (R)-lactate + A = pyruvate + AH2. In vitro the glycolate oxidase activity is inhibited by the sulfhydryl inhibitors CuSO4 and PCMB, by KCN, but not by the metal complexing agent EDTA. In terms of biological role, component of a complex that catalyzes the oxidation of glycolate to glyoxylate. Is required for E.coli to grow on glycolate as a sole source of carbon. Is also able to oxidize D-lactate ((R)-lactate) with a similar rate. Does not link directly to O(2), and 2,6-dichloroindophenol (DCIP) and phenazine methosulfate (PMS) can act as artificial electron acceptors in vitro, but the physiological molecule that functions as a primary electron acceptor during glycolate oxidation is unknown. The polypeptide is Glycolate oxidase subunit GlcE (Escherichia coli (strain K12)).